We begin with the raw amino-acid sequence, 165 residues long: Large ribosomal subunit protein uL15 (165 aa).

A compositionally biased stretch (basic residues) spans 1–30 (MTNKKRRQRGSRTHGGGTHKNRRGAGHRGG). Disordered stretches follow at residues 1 to 39 (MTNKKRRQRGSRTHGGGTHKNRRGAGHRGGRGAAGRAKH) and 137 to 165 (AGGEATLSERAEEAADESENTSDDEDDEA). The span at 150–165 (AADESENTSDDEDDEA) shows a compositional bias: acidic residues.

The protein belongs to the universal ribosomal protein uL15 family. Part of the 50S ribosomal subunit.

In terms of biological role, binds to the 23S rRNA. The protein is Large ribosomal subunit protein uL15 of Halorubrum lacusprofundi (strain ATCC 49239 / DSM 5036 / JCM 8891 / ACAM 34).